The sequence spans 202 residues: Small ribosomal subunit protein uS4c (202 aa).

The 64-residue stretch at 90–153 (MRLDNVIFRL…KSETIISKNI (64 aa)) folds into the S4 RNA-binding domain.

Belongs to the universal ribosomal protein uS4 family. As to quaternary structure, part of the 30S ribosomal subunit. Contacts protein S5. The interaction surface between S4 and S5 is involved in control of translational fidelity.

The protein resides in the plastid. It is found in the chloroplast. Its function is as follows. One of the primary rRNA binding proteins, it binds directly to 16S rRNA where it nucleates assembly of the body of the 30S subunit. Functionally, with S5 and S12 plays an important role in translational accuracy. This chain is Small ribosomal subunit protein uS4c (rps4), found in Hylocomium splendens (Glittering wood-moss).